Here is a 255-residue protein sequence, read N- to C-terminus: Hydroxylmethylpyrimidine kinase (255 aa).

Gly18, Gln43, and Asn110 together coordinate pyridoxal 5'-phosphate. Residue Gln43 participates in 4-amino-5-hydroxymethyl-2-methylpyrimidine binding. Cys195 and Cys207 are joined by a disulfide. Ser208 contributes to the pyridoxal 5'-phosphate binding site.

Belongs to the ThiD family. Homodimer. Crystals show a disulfide bond between Cys-195 and Cys-207. This disulfide is possibly an artifact of the purification and crystallization conditions. However, as it is adjacent to the conserved GSGC of the oxyanion hole, this disulfide may help to orient the backbone amides toward the oxanion intermediate.

The catalysed reaction is 4-amino-5-hydroxymethyl-2-methylpyrimidine + ATP = 4-amino-2-methyl-5-(phosphooxymethyl)pyrimidine + ADP + H(+). It participates in cofactor biosynthesis; thiamine diphosphate biosynthesis. Inhibited by pyridoxal phosphate at high micromolar concentrations. In terms of biological role, catalyzes the phosphorylation of hydroxymethylpyrimidine (HMP) to hydroxymethylpyrimidine phosphate (HMP-P). Unlike other HMPKs, it cannot catalyze the phosphorylation of HMP-P to generate the diphosphate HMP-PP. Shows no activity with pyridoxal, pyridoxamine or pyridoxine. Does not show phosphatase activity. The sequence is that of Hydroxylmethylpyrimidine kinase from Acinetobacter baumannii (strain IS-123).